The primary structure comprises 493 residues: MLTLLVLVFTVGLLLYVKLRWHYSYWSRRGVAGERPVYFRGNMSGLGRDLHWTDINLRIYRKFRGVERYCGYFTFMTKSLFIMDLELIRDIMIRDFSSFADRGLFHNVRDDPLTGNLLFLDGPEWRWLRQNLTQVFTSGKMKFMFPNMVEVGEKLTQACRLQVGEIEAKDLCARFTTDVIGSCAFGLECNSLQDPESQFRRMGRSVTQEPLHSVLVQAFMFAQPELARKLRFRLFRPEVSEFFLDTVRQTLDYRRRENIHRNDLIQLLMELGEEGVKDALSFEQIAAQALVFFLAGFDTSSTTMSFCLYELALNPDVQERLRVEVLAVLKRNNQKLTYDSVQEMPYLDQVVAETLRKYPILPHLLRRSTKEYQIPNSNLILEPGSKIIIPVHSIHHDPELYPDPEKFDPSRFEPEEIKARHPFAYLPFGEGPRNCIGERFGKLQVKVGLVYLLRDFKFSRSEKTQIPLKFSSRNFLISTQEGVHLRMEGLERP.

C435 lines the heme pocket.

This sequence belongs to the cytochrome P450 family. Requires heme as cofactor.

The protein resides in the endoplasmic reticulum membrane. The protein localises to the microsome membrane. Its function is as follows. May be involved in the metabolism of insect hormones and in the breakdown of synthetic insecticides. In Drosophila melanogaster (Fruit fly), this protein is Probable cytochrome P450 6a13 (Cyp6a13).